The sequence spans 374 residues: MINKKLLFLVFALAKGVLADEEDEYEEDYNMNPELENPGMFKHVDWRDFRLEFVILACFFLYVFSFITQKKKNQKIASRWYGSLQSSFRQQFAQYGPGPNSSPIIYDSPTEFSSYLTGRLNVKNVYTTLQLFPRQDLLAYSLNQIVEILLGNVMSSVLPVADRFQFDLTLADQNLKAERFVFAIVHKDCMRILREIRYDLSFTRISSSPYLPETHVLMSENNECSQAIFEIPEFMSSINECIENLEYFIVTDQPSVPPATEKDYVTKPRIEASIRIKKITSLSGLSNATGSALFNSLLLVADSCPKFQWRPEVSKKLTSARKLAFEQVVHASAAKAAKKKVKSSGDISKLSESDQKKRMERERQRKMRRRAKKM.

Residues 49–68 (FRLEFVILACFFLYVFSFIT) traverse the membrane as a helical segment. N287 is a glycosylation site (N-linked (GlcNAc...) asparagine). The segment at 335–374 (KAAKKKVKSSGDISKLSESDQKKRMERERQRKMRRRAKKM) is disordered. The segment covering 349–363 (KLSESDQKKRMERER) has biased composition (basic and acidic residues). Positions 364–374 (QRKMRRRAKKM) are enriched in basic residues.

The protein belongs to the UPF0674 family.

It localises to the endoplasmic reticulum membrane. The polypeptide is UPF0674 endoplasmic reticulum membrane protein C2G5.01 (Schizosaccharomyces pombe (strain 972 / ATCC 24843) (Fission yeast)).